A 166-amino-acid chain; its full sequence is NAD(P)H-quinone oxidoreductase subunit I, chloroplastic (166 aa).

2 consecutive 4Fe-4S ferredoxin-type domains span residues Gly-55–Lys-84 and Leu-95–Glu-124. Cys-64, Cys-67, Cys-70, Cys-74, Cys-104, Cys-107, Cys-110, and Cys-114 together coordinate [4Fe-4S] cluster.

It belongs to the complex I 23 kDa subunit family. As to quaternary structure, NDH is composed of at least 16 different subunits, 5 of which are encoded in the nucleus. [4Fe-4S] cluster is required as a cofactor.

It localises to the plastid. The protein resides in the chloroplast thylakoid membrane. The enzyme catalyses a plastoquinone + NADH + (n+1) H(+)(in) = a plastoquinol + NAD(+) + n H(+)(out). It catalyses the reaction a plastoquinone + NADPH + (n+1) H(+)(in) = a plastoquinol + NADP(+) + n H(+)(out). NDH shuttles electrons from NAD(P)H:plastoquinone, via FMN and iron-sulfur (Fe-S) centers, to quinones in the photosynthetic chain and possibly in a chloroplast respiratory chain. The immediate electron acceptor for the enzyme in this species is believed to be plastoquinone. Couples the redox reaction to proton translocation, and thus conserves the redox energy in a proton gradient. The chain is NAD(P)H-quinone oxidoreductase subunit I, chloroplastic from Perymeniopsis ovalifolia.